A 313-amino-acid chain; its full sequence is Protein FixB (313 aa).

255–283 is an FAD binding site; it reads LYLAVGISGQIQHMVGANASQTIFAINKD.

It belongs to the ETF alpha-subunit/FixB family. Heterodimer of FixA and FixB.

The protein operates within amine and polyamine metabolism; carnitine metabolism. Required for anaerobic carnitine reduction. May bring reductant to CaiA. This Escherichia coli O81 (strain ED1a) protein is Protein FixB.